A 364-amino-acid polypeptide reads, in one-letter code: MPKRPTPSRTLVHVQELHDAPLAPLTTFRLGGPATRLITATTDAEVIAAVREADDSGTPLLLIGGGSNLVIGDKGFAGTALRIATTGFGLDGTKVELAAGEVWTDAVARTVEAGLAGIECLAGIPGSAGATPIQNVGAYGQEVSSTITEVIAYDRKTHETVTIPNAECAFSYRHSRFKADPERYVVLRVRFELEDADGLSAPVKYAETARALGVEPGDRVPLAAARETVLGLRSGKGMVLDPEDHDTWSAGSFFTNPILTEAECAAFHARVRERLGADAVPPAYPAGDGRTKTSAAWLIDKSGFTKGYGSGPARISTKHTLALTNRGEATTEDLLALAREVVAGVRDAFGITLVNEPVTVGVEL.

Residues 30–196 (LGGPATRLIT…LRVRFELEDA (167 aa)) enclose the FAD-binding PCMH-type domain. The active site involves arginine 173. Serine 252 serves as the catalytic Proton donor. The active site involves glutamate 356.

This sequence belongs to the MurB family. FAD is required as a cofactor.

The protein localises to the cytoplasm. It catalyses the reaction UDP-N-acetyl-alpha-D-muramate + NADP(+) = UDP-N-acetyl-3-O-(1-carboxyvinyl)-alpha-D-glucosamine + NADPH + H(+). The protein operates within cell wall biogenesis; peptidoglycan biosynthesis. Functionally, cell wall formation. The chain is UDP-N-acetylenolpyruvoylglucosamine reductase from Streptomyces avermitilis (strain ATCC 31267 / DSM 46492 / JCM 5070 / NBRC 14893 / NCIMB 12804 / NRRL 8165 / MA-4680).